Reading from the N-terminus, the 303-residue chain is RELT-like protein 2 (303 aa).

The chain crosses the membrane as a helical span at residues Leu-15–Ile-35. Disordered stretches follow at residues Cys-46–Met-67 and Cys-132–Met-303. Position 52 is a phosphoserine (Ser-52). Basic and acidic residues-rich tracts occupy residues Arg-148–Thr-158 and Thr-172–Pro-188. Positions Gly-194–Pro-212 are enriched in gly residues. The segment covering Gln-278–Leu-296 has biased composition (polar residues).

The protein belongs to the RELT family. As to quaternary structure, interacts with RELT, RELL1 and OXSR1. Interacts with PLSCR1. Interacts with TRAF2. In terms of processing, phosphorylated in vitro by OXSR1. Primarily expressed in spleen, thymus, testis, peripheral blood leukocytes, brain and placenta. Not detected in prostate, ovary, small intestine, colon, heart, lung, liver, skeletal muscle, kidney and pancreas.

Its subcellular location is the cell membrane. Induces activation of MAPK14/p38 cascade, when overexpressed. Induces apoptosis, when overexpressed. The polypeptide is RELT-like protein 2 (RELL2) (Homo sapiens (Human)).